The primary structure comprises 121 residues: Small ribosomal subunit protein uS13 (121 aa).

A disordered region spans residues 95 to 121 (LPVRGQNTKNNARTRKGKAVAIAGKKK). Basic residues predominate over residues 106 to 121 (ARTRKGKAVAIAGKKK).

It belongs to the universal ribosomal protein uS13 family. Part of the 30S ribosomal subunit. Forms a loose heterodimer with protein S19. Forms two bridges to the 50S subunit in the 70S ribosome.

In terms of biological role, located at the top of the head of the 30S subunit, it contacts several helices of the 16S rRNA. In the 70S ribosome it contacts the 23S rRNA (bridge B1a) and protein L5 of the 50S subunit (bridge B1b), connecting the 2 subunits; these bridges are implicated in subunit movement. Contacts the tRNAs in the A and P-sites. The sequence is that of Small ribosomal subunit protein uS13 from Streptococcus equi subsp. zooepidemicus (strain H70).